The chain runs to 485 residues: N-succinylglutamate 5-semialdehyde dehydrogenase (485 aa).

G220 to G225 lines the NAD(+) pocket. Catalysis depends on residues E243 and C278.

It belongs to the aldehyde dehydrogenase family. AstD subfamily.

It catalyses the reaction N-succinyl-L-glutamate 5-semialdehyde + NAD(+) + H2O = N-succinyl-L-glutamate + NADH + 2 H(+). It functions in the pathway amino-acid degradation; L-arginine degradation via AST pathway; L-glutamate and succinate from L-arginine: step 4/5. In terms of biological role, catalyzes the NAD-dependent reduction of succinylglutamate semialdehyde into succinylglutamate. In Aliivibrio salmonicida (strain LFI1238) (Vibrio salmonicida (strain LFI1238)), this protein is N-succinylglutamate 5-semialdehyde dehydrogenase.